A 255-amino-acid polypeptide reads, in one-letter code: Carboxy-S-adenosyl-L-methionine synthase (255 aa).

S-adenosyl-L-methionine-binding positions include Y45, 70–72 (GCS), 124–125 (DI), and N139.

This sequence belongs to the class I-like SAM-binding methyltransferase superfamily. Cx-SAM synthase family. As to quaternary structure, homodimer.

It carries out the reaction prephenate + S-adenosyl-L-methionine = carboxy-S-adenosyl-L-methionine + 3-phenylpyruvate + H2O. Catalyzes the conversion of S-adenosyl-L-methionine (SAM) to carboxy-S-adenosyl-L-methionine (Cx-SAM). The polypeptide is Carboxy-S-adenosyl-L-methionine synthase (Hamiltonella defensa subsp. Acyrthosiphon pisum (strain 5AT)).